The sequence spans 320 residues: Cytosolic Fe-S cluster assembly factor NUBP1 (320 aa).

Met-1 is modified (N-acetylmethionine). 4 residues coordinate [4Fe-4S] cluster: Cys-8, Cys-22, Cys-25, and Cys-31. Residue 62–69 coordinates ATP; it reads GKGGVGKS. [4Fe-4S] cluster is bound by residues Cys-235 and Cys-238. Ser-319 carries the phosphoserine modification.

Belongs to the Mrp/NBP35 ATP-binding proteins family. NUBP1/NBP35 subfamily. In terms of assembly, heterotetramer of 2 NUBP1 and 2 NUBP2 chains. Interacts with KIFC1. Interacts with the BBS/CCT complex subunit CCT1. Requires [4Fe-4S] cluster as cofactor.

Its subcellular location is the cytoplasm. It localises to the nucleus. It is found in the cell projection. The protein resides in the cytoskeleton. The protein localises to the cilium axoneme. Its subcellular location is the cilium basal body. It localises to the microtubule organizing center. It is found in the centrosome. The protein resides in the centriole. In terms of biological role, component of the cytosolic iron-sulfur (Fe/S) protein assembly (CIA) machinery. Required for maturation of extramitochondrial Fe-S proteins. The NUBP1-NUBP2 heterotetramer forms a Fe-S scaffold complex, mediating the de novo assembly of an Fe-S cluster and its transfer to target apoproteins. Implicated in the regulation of centrosome duplication. Negatively regulates cilium formation and structure. This chain is Cytosolic Fe-S cluster assembly factor NUBP1, found in Rattus norvegicus (Rat).